The chain runs to 242 residues: ATP-dependent dethiobiotin synthetase BioD (242 aa).

12-17 (SVGKTI) contributes to the ATP binding site. Thr-16 serves as a coordination point for Mg(2+). Lys-37 is a catalytic residue. Asp-66 is an ATP binding site. The Mg(2+) site is built by Asp-66 and Glu-124. 184-185 (NR) contributes to the ATP binding site.

This sequence belongs to the dethiobiotin synthetase family. As to quaternary structure, homodimer. Mg(2+) serves as cofactor.

Its subcellular location is the cytoplasm. The catalysed reaction is (7R,8S)-7,8-diammoniononanoate + CO2 + ATP = (4R,5S)-dethiobiotin + ADP + phosphate + 3 H(+). The protein operates within cofactor biosynthesis; biotin biosynthesis; biotin from 7,8-diaminononanoate: step 1/2. Its function is as follows. Catalyzes a mechanistically unusual reaction, the ATP-dependent insertion of CO2 between the N7 and N8 nitrogen atoms of 7,8-diaminopelargonic acid (DAPA, also called 7,8-diammoniononanoate) to form a ureido ring. In Mannheimia succiniciproducens (strain KCTC 0769BP / MBEL55E), this protein is ATP-dependent dethiobiotin synthetase BioD.